Reading from the N-terminus, the 357-residue chain is N-methyltransferase dtpB (357 aa).

The protein belongs to the methyltransferase superfamily.

The protein operates within alkaloid biosynthesis. Its function is as follows. N-methyltransferase; part of the gene cluster that mediates the biosynthesis of the dimeric diketopiperazine alkaloid ditryptophenaline. The nonribosomal peptide synthase dtpA accepts L-tryptophan and L-phenylalanine as its substrates and forms the phenylalanyl-tryptophanyl cyclic dipeptide product cyclophenylalanyltryptophenyl. The N-methyltransferase dtpB is responsible for the N-methylation of cyclophenylalanyltryptophenyl to yield cyclo-N-methylphenylalanyltryptophenyl. The cytochrome P450 monooxygenase is responsible not only for pyrroloindole ring formation but also for concurrent dimerization of N-methylphenylalanyltryptophanyl diketopiperazine monomers into a homodimeric product. This is N-methyltransferase dtpB from Aspergillus flavus (strain ATCC 200026 / FGSC A1120 / IAM 13836 / NRRL 3357 / JCM 12722 / SRRC 167).